We begin with the raw amino-acid sequence, 390 residues long: uncharacterized protein (390 aa).

Positions 215–325 constitute a Glutaredoxin domain; the sequence is SRFKRKTLGK…KLIKDCEMVE (111 aa).

This is an uncharacterized protein from Arabidopsis thaliana (Mouse-ear cress).